A 582-amino-acid polypeptide reads, in one-letter code: ATP-dependent lipid A-core flippase (582 aa).

5 helical membrane-spanning segments follow: residues 16–36 (LWPT…ALIL), 63–83 (VLVW…ITSY), 153–173 (IIGL…ILIV), 253–273 (PIIQ…ASFP), and 275–295 (VMDN…IALM). One can recognise an ABC transmembrane type-1 domain in the interval 28–310 (IVAGVALILN…LTNVNAQFQR (283 aa)). The ABC transporter domain occupies 342-578 (VEFRNVTFTY…RGVYAQLHKM (237 aa)). An ATP-binding site is contributed by 376–383 (GRSGSGKS).

This sequence belongs to the ABC transporter superfamily. Lipid exporter (TC 3.A.1.106) family. As to quaternary structure, homodimer.

The protein localises to the cell inner membrane. It catalyses the reaction ATP + H2O + lipid A-core oligosaccharideSide 1 = ADP + phosphate + lipid A-core oligosaccharideSide 2.. Involved in lipopolysaccharide (LPS) biosynthesis. Translocates lipid A-core from the inner to the outer leaflet of the inner membrane. Transmembrane domains (TMD) form a pore in the inner membrane and the ATP-binding domain (NBD) is responsible for energy generation. The chain is ATP-dependent lipid A-core flippase from Shigella flexneri.